Reading from the N-terminus, the 247-residue chain is Opacity protein opA52 (247 aa).

Alanine 1 is a signal peptide.

Belongs to the opacity porin family.

The protein localises to the cell outer membrane. Functionally, implicated in a number of adherence functions. OPA proteins are implicated in pathogenesis and are subject to phase variation. This Neisseria gonorrhoeae protein is Opacity protein opA52 (opaG).